The primary structure comprises 95 residues: MSSGGLLLLLGLLTLWAELTPVSSRDRPKFCYLPAEPGECNAYMPSFYYDSASNKCKKFIYGGCRGNANNFKTRDECHHTCVASGKGIQPRIGSN.

The N-terminal stretch at 1-24 is a signal peptide; sequence MSSGGLLLLLGLLTLWAELTPVSS. Residues 31-81 form the BPTI/Kunitz inhibitor domain; the sequence is CYLPAEPGECNAYMPSFYYDSASNKCKKFIYGGCRGNANNFKTRDECHHTC. 3 disulfide bridges follow: C31/C81, C40/C64, and C56/C77. The propeptide occupies 92-95; that stretch reads IGSN.

The protein belongs to the venom Kunitz-type family. Expressed by the venom gland.

The protein resides in the secreted. Serine protease inhibitor. This chain is Kunitz-type serine protease inhibitor ki-VN, found in Vipera nikolskii (Nikolsky's adder).